A 106-amino-acid chain; its full sequence is L-rhamnose mutarotase (106 aa).

Position 20 (Tyr20) interacts with substrate. Residue His24 is the Proton donor of the active site. Substrate-binding positions include Tyr43 and 78 to 79 (WW).

The protein belongs to the rhamnose mutarotase family. In terms of assembly, homodimer.

It is found in the cytoplasm. It catalyses the reaction alpha-L-rhamnose = beta-L-rhamnose. It participates in carbohydrate metabolism; L-rhamnose metabolism. In terms of biological role, involved in the anomeric conversion of L-rhamnose. This is L-rhamnose mutarotase from Leptothrix cholodnii (strain ATCC 51168 / LMG 8142 / SP-6) (Leptothrix discophora (strain SP-6)).